Reading from the N-terminus, the 405-residue chain is Deoxyguanosinetriphosphate triphosphohydrolase-like protein (405 aa).

Positions 75–219 constitute an HD domain; the sequence is RLTHTIEVAQ…AAIADDIAYN (145 aa).

Belongs to the dGTPase family. Type 2 subfamily.

In Sinorhizobium medicae (strain WSM419) (Ensifer medicae), this protein is Deoxyguanosinetriphosphate triphosphohydrolase-like protein.